We begin with the raw amino-acid sequence, 328 residues long: Putative tyrosine-protein kinase C03B1.5 (328 aa).

Residues 25–288 (WSPALKIGSG…ALHASSQTYL (264 aa)) enclose the Protein kinase domain. ATP is bound by residues 31–39 (IGSGAFGEV) and K62. D155 serves as the catalytic Proton acceptor.

This sequence belongs to the protein kinase superfamily. Tyr protein kinase family.

The catalysed reaction is L-tyrosyl-[protein] + ATP = O-phospho-L-tyrosyl-[protein] + ADP + H(+). This is Putative tyrosine-protein kinase C03B1.5 from Caenorhabditis elegans.